The sequence spans 148 residues: Arginine repressor (148 aa).

Belongs to the ArgR family.

Its subcellular location is the cytoplasm. The protein operates within amino-acid biosynthesis; L-arginine biosynthesis [regulation]. In terms of biological role, regulates arginine biosynthesis genes. The chain is Arginine repressor from Acidobacterium capsulatum (strain ATCC 51196 / DSM 11244 / BCRC 80197 / JCM 7670 / NBRC 15755 / NCIMB 13165 / 161).